The sequence spans 361 residues: DNA replication and repair protein RecF (361 aa).

30-37 contacts ATP; it reads GANGSGKT.

The protein belongs to the RecF family.

It localises to the cytoplasm. Its function is as follows. The RecF protein is involved in DNA metabolism; it is required for DNA replication and normal SOS inducibility. RecF binds preferentially to single-stranded, linear DNA. It also seems to bind ATP. This chain is DNA replication and repair protein RecF, found in Chromohalobacter salexigens (strain ATCC BAA-138 / DSM 3043 / CIP 106854 / NCIMB 13768 / 1H11).